The chain runs to 2294 residues: Protein Ycf2 (2294 aa).

1635–1642 lines the ATP pocket; that stretch reads GSIGTGRS.

This sequence belongs to the Ycf2 family.

Its subcellular location is the plastid. It is found in the chloroplast stroma. In terms of biological role, probable ATPase of unknown function. Its presence in a non-photosynthetic plant (Epifagus virginiana) and experiments in tobacco indicate that it has an essential function which is probably not related to photosynthesis. The protein is Protein Ycf2 of Ranunculus macranthus (Large buttercup).